We begin with the raw amino-acid sequence, 827 residues long: Translation initiation factor IF-2 (827 aa).

The interval 49-205 (ALNREKEEKE…GAPDKKREWE (157 aa)) is disordered. Composition is skewed to basic and acidic residues over residues 50–73 (LNRE…KAEA), 96–106 (RPREQRSDRPQ), 116–129 (PEPR…RPGE), 137–150 (RPRD…KERG), 157–168 (FGEKKERPPFPR), and 182–205 (EAPK…REWE). The 170-residue stretch at 326–495 (PRPPIVTVMG…LLVADLKELK (170 aa)) folds into the tr-type G domain. Positions 335-342 (GHVDHGKT) are G1. 335–342 (GHVDHGKT) is a binding site for GTP. Residues 360-364 (GITQH) are G2. Residues 381 to 384 (DTPG) are G3. Residues 381–385 (DTPGH) and 435–438 (NKID) each bind GTP. The interval 435–438 (NKID) is G4. Positions 471–473 (SAL) are G5.

It belongs to the TRAFAC class translation factor GTPase superfamily. Classic translation factor GTPase family. IF-2 subfamily.

Its subcellular location is the cytoplasm. One of the essential components for the initiation of protein synthesis. Protects formylmethionyl-tRNA from spontaneous hydrolysis and promotes its binding to the 30S ribosomal subunits. Also involved in the hydrolysis of GTP during the formation of the 70S ribosomal complex. The protein is Translation initiation factor IF-2 of Carboxydothermus hydrogenoformans (strain ATCC BAA-161 / DSM 6008 / Z-2901).